The primary structure comprises 131 residues: Transcription antitermination protein NusB (131 aa).

It belongs to the NusB family.

Its function is as follows. Involved in transcription antitermination. Required for transcription of ribosomal RNA (rRNA) genes. Binds specifically to the boxA antiterminator sequence of the ribosomal RNA (rrn) operons. The protein is Transcription antitermination protein NusB of Caldicellulosiruptor saccharolyticus (strain ATCC 43494 / DSM 8903 / Tp8T 6331).